Reading from the N-terminus, the 464-residue chain is MEKKESLDSSLKEIVSVCKRRGFVYPGSEIYGGLSNTFDYGPYGVELLQNLKQLWWKFFVHLREDVVGLDSSILLNPKVWEASGHVSNFTDPLIDCKNCKTRIRADKFLEDQKGEGFATGLTLEKMNQVIKENNFSCPNCGQRGTFTEARDFNLMFKTSHGASAEDSLDIYLRPETAQGIFLNFKNVVSTTRRKIPFGIAQIGKSFRNEIMARQFVFRTREFEQMEMEFFCEPGTQKEWFSHWVNYCMNWLTEQVGVKKENLRIREHEKEELSFYSEGTSDIEFKYNFGWGELWGIASRTDYDLNQHQKFSGEDLKYQDQVQNKKYVPFVVEPALGVNRLFLAVVTDAYQEEKLPDGEIRTVLRFSPKIAPVKVAVFPLMKKDGLLEKSREIFADLSKLGNIEYDDSGAIGKRYRRQDEIGTPFCITVDYDTLKDDTVTVRERDSMAQERVSVTRLRNWLFERL.

Residues R104 and E175 each coordinate substrate. ATP contacts are provided by residues 207–209 (RNE), 217–222 (FRTREF), 292–293 (EL), and 336–339 (GVNR). 222–226 (FEQME) lines the substrate pocket. 332 to 336 (EPALG) provides a ligand contact to substrate.

Belongs to the class-II aminoacyl-tRNA synthetase family. In terms of assembly, homodimer.

The protein resides in the cytoplasm. It carries out the reaction tRNA(Gly) + glycine + ATP = glycyl-tRNA(Gly) + AMP + diphosphate. Its function is as follows. Catalyzes the attachment of glycine to tRNA(Gly). In Leptospira borgpetersenii serovar Hardjo-bovis (strain JB197), this protein is Glycine--tRNA ligase.